The chain runs to 348 residues: Caricain (348 aa).

An N-terminal signal peptide occupies residues 1–16 (MAMIPSISKLLFVAIC). Positions 17–132 (LFVHMSVSFG…EEFINEDTVN (116 aa)) are cleaved as a propeptide — activation peptide. An N-linked (GlcNAc...) asparagine glycan is attached at Asn86. 3 cysteine pairs are disulfide-bonded: Cys154–Cys195, Cys188–Cys227, and Cys285–Cys336. Cys157 is a catalytic residue. Residue Cys157 participates in E64 binding. Active-site residues include His291 and Asn311.

The protein belongs to the peptidase C1 family. Monomer.

The catalysed reaction is Hydrolysis of proteins with broad specificity for peptide bonds, similar to those of papain and chymopapain.. With respect to regulation, repressed by the active-site-directed cysteine protease inhibitor E64 (L-trans-epoxysuccinyl-leucylamide-(4-guanido)-butane) produced by Aspergillus japonicus. Functionally, cysteine proteinase with a high level of diversity in substrate specificity. The chain is Caricain from Carica papaya (Papaya).